The sequence spans 554 residues: CTP synthase (554 aa).

The tract at residues 1–265 is amidoligase domain; sequence MTPLIFVTGG…DEIVIDQFKL (265 aa). S13 is a binding site for CTP. Residue S13 coordinates UTP. Residues 14–19 and D71 each bind ATP; that span reads SLGKGI. Positions 71 and 139 each coordinate Mg(2+). CTP contacts are provided by residues 146–148, 186–191, and K222; these read DIE and KTKPTQ. Residues 186-191 and K222 each bind UTP; that span reads KTKPTQ. The region spanning 292 to 545 is the Glutamine amidotransferase type-1 domain; sequence TIAVVGKYVD…VKAARARKAG (254 aa). G353 serves as a coordination point for L-glutamine. Residue C380 is the Nucleophile; for glutamine hydrolysis of the active site. Residues 381-384, E404, and R471 contribute to the L-glutamine site; that span reads YGMQ. Catalysis depends on residues H518 and E520.

The protein belongs to the CTP synthase family. As to quaternary structure, homotetramer.

The enzyme catalyses UTP + L-glutamine + ATP + H2O = CTP + L-glutamate + ADP + phosphate + 2 H(+). The catalysed reaction is L-glutamine + H2O = L-glutamate + NH4(+). It catalyses the reaction UTP + NH4(+) + ATP = CTP + ADP + phosphate + 2 H(+). Its pathway is pyrimidine metabolism; CTP biosynthesis via de novo pathway; CTP from UDP: step 2/2. Allosterically activated by GTP, when glutamine is the substrate; GTP has no effect on the reaction when ammonia is the substrate. The allosteric effector GTP functions by stabilizing the protein conformation that binds the tetrahedral intermediate(s) formed during glutamine hydrolysis. Inhibited by the product CTP, via allosteric rather than competitive inhibition. Its function is as follows. Catalyzes the ATP-dependent amination of UTP to CTP with either L-glutamine or ammonia as the source of nitrogen. Regulates intracellular CTP levels through interactions with the four ribonucleotide triphosphates. This chain is CTP synthase, found in Xylella fastidiosa (strain 9a5c).